The following is a 377-amino-acid chain: D-alanine--D-alanine ligase (377 aa).

One can recognise an ATP-grasp domain in the interval 140–349 (KELLTVNGIR…NAKLVDMLID (210 aa)). 170 to 225 (VAELGNIVFVKAANQGSSVGISRVTNAEEYTEALSDSFQYDYKVLIEEAVNGAREL) lines the ATP pocket. 3 residues coordinate Mg(2+): Asp-303, Glu-316, and Asn-318.

This sequence belongs to the D-alanine--D-alanine ligase family. It depends on Mg(2+) as a cofactor. The cofactor is Mn(2+).

It localises to the cytoplasm. The enzyme catalyses 2 D-alanine + ATP = D-alanyl-D-alanine + ADP + phosphate + H(+). Its pathway is cell wall biogenesis; peptidoglycan biosynthesis. In terms of biological role, cell wall formation. This chain is D-alanine--D-alanine ligase, found in Leuconostoc mesenteroides subsp. mesenteroides (strain ATCC 8293 / DSM 20343 / BCRC 11652 / CCM 1803 / JCM 6124 / NCDO 523 / NBRC 100496 / NCIMB 8023 / NCTC 12954 / NRRL B-1118 / 37Y).